Reading from the N-terminus, the 332-residue chain is MSPPAAIFEPAVAPSPSLKAKVLVPETVPASGTSQTHLLDHFGGKWDDFKFAPIRESQVSRAMTRRYFQDLDKYAESDIVIVGAGSCGLSTAYVLAKARPDLKIAIIEASVSPGGGAWLGGQLFSAMVLRRPAEVFLNEIGVPFEEDPANPNFVVVKHASLFTSTLMSKVLSFPNVKLFNATAVEDLVTRPSASGDAKDTQIAGVVVNWTLVTLHHDDHSCMDPNTINAPVVISTTGHDGPFGAFCAKRLVSMNTVDKLGGMRGLDMNSAEDAIVKNTREVAKGLIIGGMELSEIDGFNRMGPTFGAMVLSGVKAAEEALKVFDQRQRECAE.

Residues Cys-87, 108-109, Gly-116, and Val-184 contribute to the substrate site; that span reads EA. At Cys-221 the chain carries 2,3-didehydroalanine (Cys). Residues Asp-223, His-238, Met-290, and 300 to 302 contribute to the substrate site; that span reads RMG.

The protein belongs to the THI4 family. Homooctamer. It depends on Fe cation as a cofactor. During the catalytic reaction, a sulfide is transferred from Cys-221 to a reaction intermediate, generating a dehydroalanine residue.

The protein resides in the cytoplasm. It is found in the nucleus. It catalyses the reaction [ADP-thiazole synthase]-L-cysteine + glycine + NAD(+) = [ADP-thiazole synthase]-dehydroalanine + ADP-5-ethyl-4-methylthiazole-2-carboxylate + nicotinamide + 3 H2O + 2 H(+). Functionally, involved in biosynthesis of the thiamine precursor thiazole. Catalyzes the conversion of NAD and glycine to adenosine diphosphate 5-(2-hydroxyethyl)-4-methylthiazole-2-carboxylic acid (ADT), an adenylated thiazole intermediate. The reaction includes an iron-dependent sulfide transfer from a conserved cysteine residue of the protein to a thiazole intermediate. The enzyme can only undergo a single turnover, which suggests it is a suicide enzyme. May have additional roles in adaptation to various stress conditions and in DNA damage tolerance. This chain is Thiamine thiazole synthase, found in Aspergillus fumigatus (strain ATCC MYA-4609 / CBS 101355 / FGSC A1100 / Af293) (Neosartorya fumigata).